The sequence spans 129 residues: Small ribosomal subunit protein eS6 (129 aa).

This sequence belongs to the eukaryotic ribosomal protein eS6 family.

The sequence is that of Small ribosomal subunit protein eS6 from Methanocorpusculum labreanum (strain ATCC 43576 / DSM 4855 / Z).